A 677-amino-acid chain; its full sequence is Methionine--tRNA ligase (677 aa).

The short motif at 15–25 is the 'HIGH' region element; it reads PYANGPIHIGH. Zn(2+) is bound by residues C146, C149, C159, and C162. The 'KMSKS' region signature appears at 332-336; it reads KMSKS. K335 serves as a coordination point for ATP. Residues 576 to 677 form the tRNA-binding domain; that stretch reads DFAKVDLRVA…DGAKPGMRIM (102 aa).

The protein belongs to the class-I aminoacyl-tRNA synthetase family. MetG type 1 subfamily. In terms of assembly, homodimer. Zn(2+) serves as cofactor.

The protein resides in the cytoplasm. It catalyses the reaction tRNA(Met) + L-methionine + ATP = L-methionyl-tRNA(Met) + AMP + diphosphate. Functionally, is required not only for elongation of protein synthesis but also for the initiation of all mRNA translation through initiator tRNA(fMet) aminoacylation. This is Methionine--tRNA ligase from Idiomarina loihiensis (strain ATCC BAA-735 / DSM 15497 / L2-TR).